Reading from the N-terminus, the 530-residue chain is Protein SLOW WALKER 1 (530 aa).

WD repeat units follow at residues 50 to 89, 91 to 130, 133 to 173, 176 to 216, 220 to 258, 262 to 304, and 320 to 363; these read NLVS…SSRR, SFRD…ALRT, SHSA…VISD, GHKD…SNWI, NHGL…KMVC, SHNK…VTYS, and GSTR…DESR. A Nuclear localization signal motif is present at residues 392 to 399; that stretch reads EKKGLKLT.

Expressed in cells undergoing active cell divisions, including functional megaspores and the female gametophytic cells. Accumulates in roots, stems, leaves, inflorescences and siliques.

The protein localises to the nucleus. It is found in the nucleolus. Functionally, essential protein required for nuclear division and organization during embryo sac development in female gametophyte, probably by promoting rRNA biogenesis essential for the progression of the mitotic division cycles during gametogenesis. Involved in nucleolar processing of pre-18S ribosomal RNA. This is Protein SLOW WALKER 1 from Arabidopsis thaliana (Mouse-ear cress).